A 495-amino-acid polypeptide reads, in one-letter code: Aspartyl/glutamyl-tRNA(Asn/Gln) amidotransferase subunit B (495 aa).

This sequence belongs to the GatB/GatE family. GatB subfamily. As to quaternary structure, heterotrimer of A, B and C subunits.

It catalyses the reaction L-glutamyl-tRNA(Gln) + L-glutamine + ATP + H2O = L-glutaminyl-tRNA(Gln) + L-glutamate + ADP + phosphate + H(+). It carries out the reaction L-aspartyl-tRNA(Asn) + L-glutamine + ATP + H2O = L-asparaginyl-tRNA(Asn) + L-glutamate + ADP + phosphate + 2 H(+). In terms of biological role, allows the formation of correctly charged Asn-tRNA(Asn) or Gln-tRNA(Gln) through the transamidation of misacylated Asp-tRNA(Asn) or Glu-tRNA(Gln) in organisms which lack either or both of asparaginyl-tRNA or glutaminyl-tRNA synthetases. The reaction takes place in the presence of glutamine and ATP through an activated phospho-Asp-tRNA(Asn) or phospho-Glu-tRNA(Gln). The sequence is that of Aspartyl/glutamyl-tRNA(Asn/Gln) amidotransferase subunit B from Prochlorococcus marinus (strain MIT 9313).